The primary structure comprises 308 residues: MHPTRSFQGLILTLHNYWAEHGCAILQPYDMEVGAGTFHPATTLRSLGPKPWKAAYVQPSRRPKDGRYGENPNRLQHYYQYQVLIKPSPPNLQDLYLGSLKAIGLDPTLHDVRFVEDDWESPTLGAWGLGWECWCDGMEVSQFTYFQQVCGIECSPVAGELTYGLERLAMYVQGVDNVYDLNFNGLEGDEKVTYGDVFLQAEQEYSRYNFEMANTETLHQHFIDAERECEAILKAGSTGENSLHKCVFPAYDQCIKASHVFNLMDARGVISVTERQGYILRVRNLARQCGEAFLLTDAGGFNFKREGE.

The protein belongs to the class-II aminoacyl-tRNA synthetase family. Tetramer of two alpha and two beta subunits.

It localises to the cytoplasm. The catalysed reaction is tRNA(Gly) + glycine + ATP = glycyl-tRNA(Gly) + AMP + diphosphate. The protein is Glycine--tRNA ligase alpha subunit of Brucella abortus (strain 2308).